The chain runs to 227 residues: Deoxyribose-phosphate aldolase (227 aa).

Asp-84 acts as the Proton donor/acceptor in catalysis. Catalysis depends on Lys-146, which acts as the Schiff-base intermediate with acetaldehyde. Residue Lys-188 is the Proton donor/acceptor of the active site.

This sequence belongs to the DeoC/FbaB aldolase family. DeoC type 1 subfamily.

Its subcellular location is the cytoplasm. The catalysed reaction is 2-deoxy-D-ribose 5-phosphate = D-glyceraldehyde 3-phosphate + acetaldehyde. It functions in the pathway carbohydrate degradation; 2-deoxy-D-ribose 1-phosphate degradation; D-glyceraldehyde 3-phosphate and acetaldehyde from 2-deoxy-alpha-D-ribose 1-phosphate: step 2/2. Its function is as follows. Catalyzes a reversible aldol reaction between acetaldehyde and D-glyceraldehyde 3-phosphate to generate 2-deoxy-D-ribose 5-phosphate. This is Deoxyribose-phosphate aldolase from Pyrobaculum islandicum (strain DSM 4184 / JCM 9189 / GEO3).